We begin with the raw amino-acid sequence, 78 residues long: Probable [Fe-S]-dependent transcriptional repressor (78 aa).

Iron-sulfur cluster is bound by residues Cys56, Cys61, Cys64, and Cys70.

Belongs to the FeoC family.

In terms of biological role, may function as a transcriptional regulator that controls feoABC expression. This Escherichia fergusonii (strain ATCC 35469 / DSM 13698 / CCUG 18766 / IAM 14443 / JCM 21226 / LMG 7866 / NBRC 102419 / NCTC 12128 / CDC 0568-73) protein is Probable [Fe-S]-dependent transcriptional repressor.